The sequence spans 178 residues: Large ribosomal subunit protein uL6 (178 aa).

It belongs to the universal ribosomal protein uL6 family. In terms of assembly, part of the 50S ribosomal subunit.

In terms of biological role, this protein binds to the 23S rRNA, and is important in its secondary structure. It is located near the subunit interface in the base of the L7/L12 stalk, and near the tRNA binding site of the peptidyltransferase center. The chain is Large ribosomal subunit protein uL6 from Francisella tularensis subsp. mediasiatica (strain FSC147).